Here is a 935-residue protein sequence, read N- to C-terminus: Isoleucine--tRNA ligase (935 aa).

Positions 58–68 (PYANGNLHLGH) match the 'HIGH' region motif. Glu559 is a binding site for L-isoleucyl-5'-AMP. The 'KMSKS' region signature appears at 600 to 604 (KMSKS). Residue Lys603 coordinates ATP. Zn(2+)-binding residues include Cys898, Cys901, Cys918, and Cys921.

Belongs to the class-I aminoacyl-tRNA synthetase family. IleS type 1 subfamily. In terms of assembly, monomer. It depends on Zn(2+) as a cofactor.

The protein resides in the cytoplasm. It catalyses the reaction tRNA(Ile) + L-isoleucine + ATP = L-isoleucyl-tRNA(Ile) + AMP + diphosphate. Its function is as follows. Catalyzes the attachment of isoleucine to tRNA(Ile). As IleRS can inadvertently accommodate and process structurally similar amino acids such as valine, to avoid such errors it has two additional distinct tRNA(Ile)-dependent editing activities. One activity is designated as 'pretransfer' editing and involves the hydrolysis of activated Val-AMP. The other activity is designated 'posttransfer' editing and involves deacylation of mischarged Val-tRNA(Ile). In Haemophilus ducreyi (strain 35000HP / ATCC 700724), this protein is Isoleucine--tRNA ligase.